The primary structure comprises 299 residues: Bifunctional protein FolD 1 (299 aa).

Residues 168 to 170 (GRS), S193, and I234 contribute to the NADP(+) site.

Belongs to the tetrahydrofolate dehydrogenase/cyclohydrolase family. Homodimer.

It catalyses the reaction (6R)-5,10-methylene-5,6,7,8-tetrahydrofolate + NADP(+) = (6R)-5,10-methenyltetrahydrofolate + NADPH. The catalysed reaction is (6R)-5,10-methenyltetrahydrofolate + H2O = (6R)-10-formyltetrahydrofolate + H(+). It participates in one-carbon metabolism; tetrahydrofolate interconversion. In terms of biological role, catalyzes the oxidation of 5,10-methylenetetrahydrofolate to 5,10-methenyltetrahydrofolate and then the hydrolysis of 5,10-methenyltetrahydrofolate to 10-formyltetrahydrofolate. This is Bifunctional protein FolD 1 from Rhizobium etli (strain ATCC 51251 / DSM 11541 / JCM 21823 / NBRC 15573 / CFN 42).